The primary structure comprises 476 residues: Bifunctional protein HldE (476 aa).

Positions 1 to 320 are ribokinase; that stretch reads MQNPHIPSFA…RAVHQEGGSG (320 aa). Residue 196–199 participates in ATP binding; it reads NLSE. Asp-265 is an active-site residue. The interval 345–476 is cytidylyltransferase; that stretch reads FTNGCFDIIH…KIVERIREKD (132 aa).

In the N-terminal section; belongs to the carbohydrate kinase PfkB family. This sequence in the C-terminal section; belongs to the cytidylyltransferase family. Homodimer.

It carries out the reaction D-glycero-beta-D-manno-heptose 7-phosphate + ATP = D-glycero-beta-D-manno-heptose 1,7-bisphosphate + ADP + H(+). It catalyses the reaction D-glycero-beta-D-manno-heptose 1-phosphate + ATP + H(+) = ADP-D-glycero-beta-D-manno-heptose + diphosphate. The protein operates within nucleotide-sugar biosynthesis; ADP-L-glycero-beta-D-manno-heptose biosynthesis; ADP-L-glycero-beta-D-manno-heptose from D-glycero-beta-D-manno-heptose 7-phosphate: step 1/4. Its pathway is nucleotide-sugar biosynthesis; ADP-L-glycero-beta-D-manno-heptose biosynthesis; ADP-L-glycero-beta-D-manno-heptose from D-glycero-beta-D-manno-heptose 7-phosphate: step 3/4. Functionally, catalyzes the phosphorylation of D-glycero-D-manno-heptose 7-phosphate at the C-1 position to selectively form D-glycero-beta-D-manno-heptose-1,7-bisphosphate. Catalyzes the ADP transfer from ATP to D-glycero-beta-D-manno-heptose 1-phosphate, yielding ADP-D-glycero-beta-D-manno-heptose. The protein is Bifunctional protein HldE of Alcanivorax borkumensis (strain ATCC 700651 / DSM 11573 / NCIMB 13689 / SK2).